Here is a 409-residue protein sequence, read N- to C-terminus: tRNA(Met) cytidine acetate ligase (409 aa).

ATP-binding positions include 7–20, G102, N169, and R194; that span reads VVEY…HLYH.

The protein belongs to the TmcAL family.

The protein resides in the cytoplasm. It catalyses the reaction cytidine(34) in elongator tRNA(Met) + acetate + ATP = N(4)-acetylcytidine(34) in elongator tRNA(Met) + AMP + diphosphate. Its function is as follows. Catalyzes the formation of N(4)-acetylcytidine (ac(4)C) at the wobble position of elongator tRNA(Met), using acetate and ATP as substrates. First activates an acetate ion to form acetyladenylate (Ac-AMP) and then transfers the acetyl group to tRNA to form ac(4)C34. This Clostridium botulinum (strain Kyoto / Type A2) protein is tRNA(Met) cytidine acetate ligase.